Reading from the N-terminus, the 130-residue chain is Ribonuclease P protein component (130 aa).

Belongs to the RnpA family. In terms of assembly, consists of a catalytic RNA component (M1 or rnpB) and a protein subunit.

The catalysed reaction is Endonucleolytic cleavage of RNA, removing 5'-extranucleotides from tRNA precursor.. Its function is as follows. RNaseP catalyzes the removal of the 5'-leader sequence from pre-tRNA to produce the mature 5'-terminus. It can also cleave other RNA substrates such as 4.5S RNA. The protein component plays an auxiliary but essential role in vivo by binding to the 5'-leader sequence and broadening the substrate specificity of the ribozyme. The polypeptide is Ribonuclease P protein component (Desulfovibrio desulfuricans (strain ATCC 27774 / DSM 6949 / MB)).